Consider the following 497-residue polypeptide: MTVFLSFAFLAAILTHIGCSNQRRSPENGGRRYNRIQHGQCAYTFILPEHDGNCRESTTDQYNTNALQRDAPHVEQDFSSQKLQHLEHVMENYTQWLQKIENYIVENMKSEMAQIQQNAVQNHTATMLEIGTSLLSQTAEQTRKLTDVETQVLNQTSRLEIQLLENSLSTYKLEKQLLQQTNEILKIHEKNSLLEHKIFEMEGKHKEELDTLKEEKENLQGLVTRQTYIIQELEKQLNRATTNNSVLQKQQLELMDTVHNLVNLCTKEVLLKGGKKEEEKPFRDCADVYQAGFNKSGIYTIYINNMPEPKKVFCNMDLNGGGWTVIQHREDGSLDFQRGWKEYKMGFGNPSGEYWLGNEFIFAITSQRQYTLRIELLDWEGNRAYSQYDRFHIGNEKQNYRLYLKGHTGTAGKQSSLILHGADFSTKDADNDNCMCKCALMLTGGWWFDACGPSNLNGMFYTAGQNHGKLNGIKWHYFKGPSYSLRSTTMMIRPLDF.

The N-terminal stretch at 1–15 (MTVFLSFAFLAAILT) is a signal peptide. 5 N-linked (GlcNAc...) asparagine glycosylation sites follow: N92, N122, N154, N243, and N294. Positions 153–261 (LNQTSRLEIQ…LELMDTVHNL (109 aa)) form a coiled coil. A Fibrinogen C-terminal domain is found at 276-496 (KEEEKPFRDC…STTMMIRPLD (221 aa)). 2 cysteine pairs are disulfide-bonded: C285–C314 and C438–C451.

In terms of assembly, homooligomer. Interacts with TEK/TIE2. Interacts with SVEP1/polydom. Interacts with THBD; this interaction significantly inhibits the generation of activated PC and TAFIa/CPB2 by the thrombin/thrombomodulin complex.

It localises to the secreted. Binds and activates TIE2 receptor by inducing its tyrosine phosphorylation. Implicated in endothelial developmental processes later and distinct from that of VEGF. Appears to play a crucial role in mediating reciprocal interactions between the endothelium and surrounding matrix and mesenchyme. Mediates blood vessel maturation/stability. It may play an important role in the heart early development. The polypeptide is Angiopoietin-1 (ANGPT1) (Bos taurus (Bovine)).